A 541-amino-acid chain; its full sequence is 1'-carboxy-chondrochloren decarboxylase (541 aa).

The 188-residue stretch at 39–226 (TTHRIPAIIS…TRMTIWLAPR (188 aa)) folds into the FAD-binding PCMH-type domain.

It catalyses the reaction 1'-carboxy-chondrochloren A + FAD + 2 H(+) = chondrochloren A + FADH2 + CO2. It carries out the reaction 1'-carboxy-chondrochloren B + FAD + 2 H(+) = chondrochloren B + FADH2 + CO2. It functions in the pathway antibiotic biosynthesis. With respect to regulation, activity is not affected by the addition of EDTA or/and EGTA chelators or in the presence of external metals like Zn(2+), Mg(2+), Mn(2+) and Fe(2+). Activity is inhibited under low oxygen conditions. In terms of biological role, oxidative decarboxylase involved in the biosynthesis of the antibiotics chondrochloren A and chondrochloren B. Catalyzes the decarboxylation of biologically inactive pre-chondrochloren A and pre-chondrochloren B to yield mature chondrochloren A and chondrochloren B, respectively. Cannot decarboxylate free L-tyrosine, 3-chloro-tyrosine or a number of chlorinated and non-chlorinated analog substrates containing variable N-acyl chains. The chain is 1'-carboxy-chondrochloren decarboxylase from Chondromyces crocatus.